The primary structure comprises 440 residues: Cell division protein FtsA (440 aa).

Positions 396-440 (VSSSEEQEQHHHQNEVQQRPKGKQKTQAEHNKQSKMKKLLSMFWE) are disordered.

The protein belongs to the FtsA/MreB family. As to quaternary structure, homodimer. Interacts with FtsZ.

The protein localises to the cell membrane. Cell division protein that is required for the assembly of the Z ring. May serve as a membrane anchor for the Z ring. Binds and hydrolyzes ATP. Also involved in sporulation. The protein is Cell division protein FtsA of Bacillus subtilis (strain 168).